Reading from the N-terminus, the 391-residue chain is ATP phosphoribosyltransferase regulatory subunit (391 aa).

Belongs to the class-II aminoacyl-tRNA synthetase family. HisZ subfamily. Heteromultimer composed of HisG and HisZ subunits.

Its subcellular location is the cytoplasm. It participates in amino-acid biosynthesis; L-histidine biosynthesis; L-histidine from 5-phospho-alpha-D-ribose 1-diphosphate: step 1/9. Functionally, required for the first step of histidine biosynthesis. May allow the feedback regulation of ATP phosphoribosyltransferase activity by histidine. The polypeptide is ATP phosphoribosyltransferase regulatory subunit (Bacillus licheniformis (strain ATCC 14580 / DSM 13 / JCM 2505 / CCUG 7422 / NBRC 12200 / NCIMB 9375 / NCTC 10341 / NRRL NRS-1264 / Gibson 46)).